Reading from the N-terminus, the 71-residue chain is MKEGIHPKYEVISATCSCGNEFETSSTLCKNIHLDVCSACHPFYTGKQKILDTGGRVDRFNKRFGALGSKK.

Zn(2+) is bound by residues C16, C18, C37, and C40.

Belongs to the bacterial ribosomal protein bL31 family. Type A subfamily. In terms of assembly, part of the 50S ribosomal subunit. The cofactor is Zn(2+).

Its function is as follows. Binds the 23S rRNA. The polypeptide is Large ribosomal subunit protein bL31 (Pseudoalteromonas translucida (strain TAC 125)).